The chain runs to 59 residues: Large ribosomal subunit protein bL32 (59 aa).

Residues 1-23 (MAVQQNKKSPSKRGMHRSHDFLT) form a disordered region.

It belongs to the bacterial ribosomal protein bL32 family.

This Burkholderia multivorans (strain ATCC 17616 / 249) protein is Large ribosomal subunit protein bL32.